The sequence spans 362 residues: tRNA-specific 2-thiouridylase MnmA 1 (362 aa).

Residues 29–36 (AMSGGVDS) and M55 each bind ATP. Residue C109 is the Nucleophile of the active site. A disulfide bridge connects residues C109 and C201. G133 contributes to the ATP binding site. Positions 151–153 (KDQ) are interaction with tRNA. The active-site Cysteine persulfide intermediate is the C201.

This sequence belongs to the MnmA/TRMU family.

Its subcellular location is the cytoplasm. It catalyses the reaction S-sulfanyl-L-cysteinyl-[protein] + uridine(34) in tRNA + AH2 + ATP = 2-thiouridine(34) in tRNA + L-cysteinyl-[protein] + A + AMP + diphosphate + H(+). Catalyzes the 2-thiolation of uridine at the wobble position (U34) of tRNA, leading to the formation of s(2)U34. The chain is tRNA-specific 2-thiouridylase MnmA 1 from Fusobacterium nucleatum subsp. nucleatum (strain ATCC 25586 / DSM 15643 / BCRC 10681 / CIP 101130 / JCM 8532 / KCTC 2640 / LMG 13131 / VPI 4355).